A 406-amino-acid polypeptide reads, in one-letter code: Argininosuccinate synthase (406 aa).

8-16 (AYSGGLDTS) contributes to the ATP binding site. Tyr86 is a binding site for L-citrulline. Position 116 (Gly116) interacts with ATP. Positions 118, 122, and 123 each coordinate L-aspartate. Asn122 lines the L-citrulline pocket. Positions 126, 174, 183, 259, and 271 each coordinate L-citrulline.

This sequence belongs to the argininosuccinate synthase family. Type 1 subfamily. Homotetramer.

It is found in the cytoplasm. The enzyme catalyses L-citrulline + L-aspartate + ATP = 2-(N(omega)-L-arginino)succinate + AMP + diphosphate + H(+). The protein operates within amino-acid biosynthesis; L-arginine biosynthesis; L-arginine from L-ornithine and carbamoyl phosphate: step 2/3. The protein is Argininosuccinate synthase of Oenococcus oeni (strain ATCC BAA-331 / PSU-1).